Here is a 403-residue protein sequence, read N- to C-terminus: 8-amino-7-oxononanoate synthase (403 aa).

R22 is a binding site for substrate. Position 109–110 (109–110) interacts with pyridoxal 5'-phosphate; it reads GF. Position 134 (H134) interacts with substrate. Residues S178, H206, and T232 each coordinate pyridoxal 5'-phosphate. K235 is modified (N6-(pyridoxal phosphate)lysine). T348 contacts substrate. Positions 383–403 are disordered; it reads SNDSGSKPSIESSFELKKEAQ. A compositionally biased stretch (polar residues) spans 385-394; that stretch reads DSGSKPSIES.

It belongs to the class-II pyridoxal-phosphate-dependent aminotransferase family. BioF subfamily. As to quaternary structure, homodimer. Requires pyridoxal 5'-phosphate as cofactor.

It catalyses the reaction 6-carboxyhexanoyl-[ACP] + L-alanine + H(+) = (8S)-8-amino-7-oxononanoate + holo-[ACP] + CO2. Its pathway is cofactor biosynthesis; biotin biosynthesis. Functionally, catalyzes the decarboxylative condensation of pimeloyl-[acyl-carrier protein] and L-alanine to produce 8-amino-7-oxononanoate (AON), [acyl-carrier protein], and carbon dioxide. The polypeptide is 8-amino-7-oxononanoate synthase (Vibrio atlanticus (strain LGP32) (Vibrio splendidus (strain Mel32))).